We begin with the raw amino-acid sequence, 261 residues long: Lys-63-specific deubiquitinase BRCC36 (261 aa).

The MPN domain maps to 6-149 (VHIQGDAFLV…YTCFQSVQAQ (144 aa)). Zn(2+)-binding residues include His-92, His-94, and Asp-105. The short motif at 92–105 (HSHPHITVWPSHVD) is the JAMM motif element.

Belongs to the peptidase M67A family. BRCC36 subfamily. In terms of assembly, component of the BRCA1-A complex, at least composed of brca1, bard1, uimc1/rap80, abraxas1, brcc3/brcc36, babam2 and babam1/nba1. In the BRCA1-A complex, interacts directly with ABRAXAS1 and babam2. Component of the BRISC complex, at least composed of ABRAXAS2, brcc3/brcc36, babam2 and babam1/nba1. Within the complex, interacts directly with abraxas2. Both the BRCA1-A complex and the BRISC complex bind polyubiquitin. The cofactor is Zn(2+).

It localises to the nucleus. The protein resides in the cytoplasm. It is found in the cytoskeleton. The protein localises to the spindle pole. Its function is as follows. Metalloprotease that specifically cleaves 'Lys-63'-linked polyubiquitin chains. Does not have activity toward 'Lys-48'-linked polyubiquitin chains. Component of the BRCA1-A complex, a complex that specifically recognizes 'Lys-63'-linked ubiquitinated histones H2A and H2AX at DNA lesions sites, leading to target the brca1-bard1 heterodimer to sites of DNA damage at double-strand breaks (DSBs). In the BRCA1-A complex, it specifically removes 'Lys-63'-linked ubiquitin on histones H2A and H2AX, antagonizing the rnf8-dependent ubiquitination at double-strand breaks (DSBs). Catalytic subunit of the BRISC complex, a multiprotein complex that specifically cleaves 'Lys-63'-linked ubiquitin in various substrates. Mediates the specific 'Lys-63'-specific deubiquitination associated with the COP9 signalosome complex (CSN), via the interaction of the BRISC complex with the CSN complex. The BRISC complex is required for normal mitotic spindle assembly and microtubule attachment to kinetochores via its role in deubiquitinating numa1. Plays a role in interferon signaling via its role in the deubiquitination of the interferon receptor ifnar1; deubiquitination increases ifnar1 activity by enhancing its stability and cell surface expression. Acts as a regulator of the NLRP3 inflammasome by mediating deubiquitination of nlrp3. Down-regulates the response to bacterial lipopolysaccharide (LPS) via its role in ifnar1 deubiquitination. This chain is Lys-63-specific deubiquitinase BRCC36 (brcc3), found in Xenopus laevis (African clawed frog).